We begin with the raw amino-acid sequence, 224 residues long: N-(5'-phosphoribosyl)anthranilate isomerase (224 aa).

This sequence belongs to the TrpF family.

The enzyme catalyses N-(5-phospho-beta-D-ribosyl)anthranilate = 1-(2-carboxyphenylamino)-1-deoxy-D-ribulose 5-phosphate. Its pathway is amino-acid biosynthesis; L-tryptophan biosynthesis; L-tryptophan from chorismate: step 3/5. The polypeptide is N-(5'-phosphoribosyl)anthranilate isomerase (TRP1) (Saccharomyces cerevisiae (strain ATCC 204508 / S288c) (Baker's yeast)).